Reading from the N-terminus, the 130-residue chain is MSVVRSSVHAKWIVGKVIGTAMQKTAKVRVTRLVLDPYLLKYFNKRKTYFAHDALQQCTVGDIVLLKALPVPRTKHVKHELAEIVFKVGQVVDPVTGKRCAGTTYLESPVDLETTPLAKNLEELSLSTTQ.

It belongs to the universal ribosomal protein uS17 family. Component of the mitochondrial ribosome small subunit (28S) which comprises a 12S rRNA and about 30 distinct proteins.

The protein localises to the mitochondrion. The polypeptide is Small ribosomal subunit protein uS17m (MRPS17) (Bos taurus (Bovine)).